The chain runs to 982 residues: Mitochondrial DNA mismatch repair protein mutS homolog (982 aa).

698–705 contributes to the ATP binding site; it reads SVNGAGKS. The HNH domain occupies 905–951; it reads CEICGAPADAVHHIKPKSEHKKLCNRKLNRRSNLVPVCSSCHLDIHR.

It belongs to the DNA mismatch repair MutS family.

The protein resides in the mitochondrion. May be involved in DNA-mismatch repair. This Sarcophyton glaucum (Toadstool umbrella leather coral) protein is Mitochondrial DNA mismatch repair protein mutS homolog.